Consider the following 634-residue polypeptide: (-)-limonene synthase, chloroplastic (634 aa).

A chloroplast-targeting transit peptide spans 1-21; the sequence is MSPVSAIPLAYKLCLPRSLIS. Residues R348, D385, D389, R526, and G529 each coordinate (2E)-geranyl diphosphate. Mg(2+) is bound by residues D385 and D389. Residues 385–389 carry the DDXXD motif motif; the sequence is DDIYD. Mg(2+)-binding residues include G529 and D537.

It belongs to the terpene synthase family. Tpsb subfamily. Monomer. The cofactor is Mg(2+). Mn(2+) serves as cofactor.

Its subcellular location is the plastid. It localises to the chloroplast. It carries out the reaction (2E)-geranyl diphosphate = (4S)-limonene + diphosphate. The protein operates within secondary metabolite biosynthesis; terpenoid biosynthesis. It participates in terpene metabolism; oleoresin biosynthesis. Functionally, monoterpene synthase (mono-TPS) involved in the biosynthesis of monoterpene natural products. Catalyzes the conversion of (2E)-geranyl diphosphate (GPP) into (-)-limonene. Not able to use geranylgeranyl pyrophosphate (GGPP) and farnesyl pyrophosphate (FPP) as substrates. The sequence is that of (-)-limonene synthase, chloroplastic from Picea sitchensis (Sitka spruce).